Here is a 238-residue protein sequence, read N- to C-terminus: Purine nucleoside phosphorylase DeoD-type (238 aa).

His4 contacts a purine D-ribonucleoside. Phosphate contacts are provided by residues Gly20, Arg24, Arg43, and 87–90; that span reads RVGS. A purine D-ribonucleoside is bound by residues 179-181 and 203-204; these read EME and SD. Residue Asp204 is the Proton donor of the active site.

Belongs to the PNP/UDP phosphorylase family. Homohexamer; trimer of homodimers.

The catalysed reaction is a purine D-ribonucleoside + phosphate = a purine nucleobase + alpha-D-ribose 1-phosphate. It carries out the reaction a purine 2'-deoxy-D-ribonucleoside + phosphate = a purine nucleobase + 2-deoxy-alpha-D-ribose 1-phosphate. Its function is as follows. Catalyzes the reversible phosphorolytic breakdown of the N-glycosidic bond in the beta-(deoxy)ribonucleoside molecules, with the formation of the corresponding free purine bases and pentose-1-phosphate. The protein is Purine nucleoside phosphorylase DeoD-type of Pasteurella multocida (strain Pm70).